The following is a 152-amino-acid chain: Aspartate-rich protein (152 aa).

Residues 1–19 (MQKLLLAVLFFSLLAVATA) form the signal peptide. A compositionally biased stretch (basic and acidic residues) spans 82–113 (ATPKTEAEPGSLDKGEGTKGEKGKEGKKEKGE). Residues 82 to 152 (ATPKTEAEPG…VHENDDENED (71 aa)) form a disordered region. Over residues 135-152 (DDDDDRDDVHENDDENED) the composition is skewed to acidic residues.

In terms of tissue distribution, prismatic layer of shell (at protein level). Expressed primarily in the mantle with highest level in the mantle edge and lower level in the mantle pallium.

Its subcellular location is the secreted. The polypeptide is Aspartate-rich protein (Margaritifera margaritifera (Freshwater pearl mussel)).